The following is an 898-amino-acid chain: MDHKAWPWKKKSMEKTVVESNGEVVADKIELEHRVKSLNDKLNSVEAESNKHETEAQEAIVGWEKTKAEVASLKKKLDEALNEKHRSEERSSHTDAGLKECVQQLRFVREEQERRMHDALTKASQEYERRLIVIKTELAGSGKRLAEAEGENAQLSKALLAKNKTVEDLNRERDRIEVDFNSLVSSLESKEKENVSLRYEVRVLEKELELRNEEREFSRRTAEASHKLHLENVKKVAKLESECQRLRVLVRKRLPGPAALSKMSNEVEMLGRRRVNGSPHSPMIDSEKINNLTEQLCLLEEENKTLREALNKKVSELQFSRNMYSRTASRLLEFESHLEESSRGTNIEPSRSSNVSHEVSLASVTEFDNDDKVSCADSWASALLSELDNFKNKKEMGTSLVGTPKAAEMKLMDDFAEMEKLAMVASTIDNRPGSSPICSSDSISATGPVENESNENSSEATKTSGTVYSLNPDASPKDDIKSDSLPQSLHIVLKAVMEHKHITQRNTDEVLEDIRKALSSVNHSSFSTNHQETKTLTVEDRLDMECNISKSIHRIIDVIEGVSLKDERHVSNRESERLSGYTARVLQWKTTELSSVLQRFLQACYDLLDRKADMKKFAQELSSVLEWMVNHCFSLQDVSTMRDEIKKQFEWDESRSGSEVDIGIFRQVSEAEKLRTEDVSFLACKDQLIEDKPGNQNLSRKTVEEEANDKTASASENELKLEEKQNMRTELEIAAASEKLAECQETILNLGKQLKALTNSKETALLSETLMYDVTDKSNNLPDAQPSHETTKPEKRLTSQRSSLLDQMKAEDHNTGESKDQKPQAADKNGKGGNSSVYNETIEALEQILLSDKSKGSDSNCFAIVPQKKTGGVKSLWRKLLGRNKKGKSKKVPNPFAN.

Coiled-coil stretches lie at residues 23–224 and 287–320; these read EVVA…TAEA and EKIN…LQFS. 3 disordered regions span residues 429–482, 693–723, and 777–835; these read DNRP…DIKS, PGNQ…KLEE, and KSNN…GGNS. The segment covering 434-459 has biased composition (low complexity); the sequence is SSPICSSDSISATGPVENESNENSSE. A compositionally biased stretch (polar residues) spans 460–469; the sequence is ATKTSGTVYS. Residues 703 to 764 are a coiled coil; sequence VEEEANDKTA…KALTNSKETA (62 aa). Over residues 808–822 the composition is skewed to basic and acidic residues; that stretch reads MKAEDHNTGESKDQK.

Belongs to the FPP family. In terms of assembly, interacts with WPP/MAF proteins.

This is Filament-like plant protein 7 (FPP7) from Arabidopsis thaliana (Mouse-ear cress).